The primary structure comprises 407 residues: Phosphopentomutase (407 aa).

Aspartate 11, aspartate 305, histidine 310, aspartate 346, histidine 347, and histidine 358 together coordinate Mn(2+).

It belongs to the phosphopentomutase family. It depends on Mn(2+) as a cofactor.

It is found in the cytoplasm. It carries out the reaction 2-deoxy-alpha-D-ribose 1-phosphate = 2-deoxy-D-ribose 5-phosphate. It catalyses the reaction alpha-D-ribose 1-phosphate = D-ribose 5-phosphate. The protein operates within carbohydrate degradation; 2-deoxy-D-ribose 1-phosphate degradation; D-glyceraldehyde 3-phosphate and acetaldehyde from 2-deoxy-alpha-D-ribose 1-phosphate: step 1/2. Its function is as follows. Isomerase that catalyzes the conversion of deoxy-ribose 1-phosphate (dRib-1-P) and ribose 1-phosphate (Rib-1-P) to deoxy-ribose 5-phosphate (dRib-5-P) and ribose 5-phosphate (Rib-5-P), respectively. This chain is Phosphopentomutase, found in Legionella pneumophila (strain Lens).